The sequence spans 375 residues: Major DNA-binding protein (375 aa).

Belongs to the herpesviridae DNA-binding protein family.

Its subcellular location is the host nucleus. In terms of biological role, single-stranded DNA-binding protein required for DNA replication. The polypeptide is Major DNA-binding protein (Equine herpesvirus 1 (strain HVS25A) (EHV-1)).